Reading from the N-terminus, the 712-residue chain is Follistatin-like domain-containing protein DDB_G0289517 (712 aa).

The first 21 residues, 1 to 21, serve as a signal peptide directing secretion; that stretch reads MKIQTIIQIVLISFLFLNVES. N102 carries N-linked (GlcNAc...) asparagine glycosylation. The tract at residues 181–400 is disordered; the sequence is DIYNHLNPDS…SSSPVHQDPC (220 aa). The segment covering 192–203 has biased composition (basic and acidic residues); sequence QFKDKPNHENHK. Residues 204-214 are compositionally biased toward basic residues; it reads KDKNNKKHKKD. 2 N-linked (GlcNAc...) asparagine glycosylation sites follow: N217 and N234. The segment covering 220–251 has biased composition (low complexity); that stretch reads DKNNNNNNNNNNKKNKTINNNEPNQNQQSNPI. Residues 254–269 are compositionally biased toward polar residues; sequence TFNNETPFPWNFKNQD. The segment covering 270 to 281 has biased composition (low complexity); that stretch reads QQQQKQEQTQKQ. Positions 301 to 321 are enriched in polar residues; it reads KEPTTHLNTIEPTSFTASASR. Residues 330–339 are compositionally biased toward acidic residues; that stretch reads KDEENIDENN. A compositionally biased stretch (basic and acidic residues) spans 352 to 364; it reads DDKSKKPKDDEKH. N-linked (GlcNAc...) asparagine glycosylation occurs at N369. Positions 374–384 are enriched in acidic residues; that stretch reads PADDPSIEITE. The segment covering 386–395 has biased composition (polar residues); it reads PTITPSSSPV. 2 consecutive Follistatin-like domains span residues 399-421 and 471-494; these read PCKK…AYCK and TCST…PYCQ. An N-linked (GlcNAc...) asparagine glycan is attached at N407. Residues N505, N524, and N566 are each glycosylated (N-linked (GlcNAc...) asparagine). The Follistatin-like 3 domain maps to 596–618; the sequence is SCETLLCEGVNSYCVENGGPICK. N622 carries an N-linked (GlcNAc...) asparagine glycan. Follistatin-like domains follow at residues 660-682 and 687-710; these read SCSV…PKCY and ECSN…GACL.

It localises to the secreted. This Dictyostelium discoideum (Social amoeba) protein is Follistatin-like domain-containing protein DDB_G0289517.